The chain runs to 102 residues: Small ribosomal subunit protein uS10 (102 aa).

The interval Gln-34–Lys-59 is disordered.

This sequence belongs to the universal ribosomal protein uS10 family. As to quaternary structure, part of the 30S ribosomal subunit.

Involved in the binding of tRNA to the ribosomes. The polypeptide is Small ribosomal subunit protein uS10 (Methanopyrus kandleri (strain AV19 / DSM 6324 / JCM 9639 / NBRC 100938)).